Consider the following 227-residue polypeptide: MKAVLLVSGGMDSLVATALAHHHGFELAAMHVNYGQRTWQKELECFRQICDHYGIEKRLEIDAGFLGAIGGSSLTDAAIPVGPADLAGTDIPTSYVPFRNANFLSMAVSWSEVIGANRIYIGAVEEDSSGYPDCRKVFYDAFNQVIEHGTRPETSIEIVTPLIDMSKAEIVKRGMELDAPFHFSWSCYKSEGKACGVCDSCARRLRAFASVGIADPVEYEVRPDYLQ.

Residue 7–17 (VSGGMDSLVAT) participates in ATP binding. Residues Cys187, Cys195, Cys198, and Cys201 each contribute to the Zn(2+) site.

It belongs to the QueC family. The cofactor is Zn(2+).

It carries out the reaction 7-carboxy-7-deazaguanine + NH4(+) + ATP = 7-cyano-7-deazaguanine + ADP + phosphate + H2O + H(+). The protein operates within purine metabolism; 7-cyano-7-deazaguanine biosynthesis. In terms of biological role, catalyzes the ATP-dependent conversion of 7-carboxy-7-deazaguanine (CDG) to 7-cyano-7-deazaguanine (preQ(0)). This Chlorobaculum parvum (strain DSM 263 / NCIMB 8327) (Chlorobium vibrioforme subsp. thiosulfatophilum) protein is 7-cyano-7-deazaguanine synthase.